The following is a 160-amino-acid chain: Crossover junction endodeoxyribonuclease RuvC (160 aa).

Active-site residues include aspartate 9, glutamate 68, and aspartate 141. 3 residues coordinate Mg(2+): aspartate 9, glutamate 68, and aspartate 141.

Belongs to the RuvC family. In terms of assembly, homodimer which binds Holliday junction (HJ) DNA. The HJ becomes 2-fold symmetrical on binding to RuvC with unstacked arms; it has a different conformation from HJ DNA in complex with RuvA. In the full resolvosome a probable DNA-RuvA(4)-RuvB(12)-RuvC(2) complex forms which resolves the HJ. It depends on Mg(2+) as a cofactor.

It localises to the cytoplasm. It carries out the reaction Endonucleolytic cleavage at a junction such as a reciprocal single-stranded crossover between two homologous DNA duplexes (Holliday junction).. The RuvA-RuvB-RuvC complex processes Holliday junction (HJ) DNA during genetic recombination and DNA repair. Endonuclease that resolves HJ intermediates. Cleaves cruciform DNA by making single-stranded nicks across the HJ at symmetrical positions within the homologous arms, yielding a 5'-phosphate and a 3'-hydroxyl group; requires a central core of homology in the junction. The consensus cleavage sequence is 5'-(A/T)TT(C/G)-3'. Cleavage occurs on the 3'-side of the TT dinucleotide at the point of strand exchange. HJ branch migration catalyzed by RuvA-RuvB allows RuvC to scan DNA until it finds its consensus sequence, where it cleaves and resolves the cruciform DNA. The sequence is that of Crossover junction endodeoxyribonuclease RuvC from Campylobacter jejuni (strain RM1221).